The primary structure comprises 456 residues: Glycerol-3-phosphate acyltransferase 4 (456 aa).

The N-terminal stretch at 1-37 (MFLLLPFDSLIVNLLGISLTVLFTLLLVFIIVPAIFG) is a signal peptide. 2 consecutive transmembrane segments (helical) span residues 156–176 (ISLR…CFLL) and 180–200 (IALA…VGYL). Residue asparagine 247 is glycosylated (N-linked (GlcNAc...) asparagine). An HXXXXD motif motif is present at residues 248–253 (HTSPID). N-linked (GlcNAc...) asparagine glycosylation is found at asparagine 327, asparagine 328, and asparagine 362.

It belongs to the 1-acyl-sn-glycerol-3-phosphate acyltransferase family.

It is found in the endoplasmic reticulum membrane. The catalysed reaction is sn-glycerol 3-phosphate + an acyl-CoA = a 1-acyl-sn-glycero-3-phosphate + CoA. The enzyme catalyses dodecanoyl-CoA + sn-glycerol 3-phosphate = 1-dodecanoyl-sn-glycerol 3-phosphate + CoA. It carries out the reaction sn-glycerol 3-phosphate + hexadecanoyl-CoA = 1-hexadecanoyl-sn-glycero-3-phosphate + CoA. It catalyses the reaction sn-glycerol 3-phosphate + octadecanoyl-CoA = 1-octadecanoyl-sn-glycero-3-phosphate + CoA. The catalysed reaction is sn-glycerol 3-phosphate + (9Z)-octadecenoyl-CoA = 1-(9Z-octadecenoyl)-sn-glycero-3-phosphate + CoA. The enzyme catalyses (9Z,12Z)-octadecadienoyl-CoA + sn-glycerol 3-phosphate = 1-(9Z,12Z)-octadecadienoyl-sn-glycero-3-phosphate + CoA. It functions in the pathway phospholipid metabolism; CDP-diacylglycerol biosynthesis; CDP-diacylglycerol from sn-glycerol 3-phosphate: step 1/3. Functionally, converts glycerol-3-phosphate to 1-acyl-sn-glycerol-3-phosphate (lysophosphatidic acid or LPA) by incorporating an acyl moiety at the sn-1 position of the glycerol backbone. Active against both saturated and unsaturated long-chain fatty acyl-CoAs. Protects cells against lipotoxicity. The chain is Glycerol-3-phosphate acyltransferase 4 from Pongo abelii (Sumatran orangutan).